Reading from the N-terminus, the 219-residue chain is Small ribosomal subunit protein uS3 (219 aa).

In terms of domain architecture, KH type-2 spans 38 to 106; the sequence is IREYIENRLK…RVHINIFEVK (69 aa).

It belongs to the universal ribosomal protein uS3 family. Part of the 30S ribosomal subunit. Forms a tight complex with proteins S10 and S14.

Its function is as follows. Binds the lower part of the 30S subunit head. Binds mRNA in the 70S ribosome, positioning it for translation. The protein is Small ribosomal subunit protein uS3 of Halalkalibacterium halodurans (strain ATCC BAA-125 / DSM 18197 / FERM 7344 / JCM 9153 / C-125) (Bacillus halodurans).